The sequence spans 143 residues: Large ribosomal subunit protein uL15 (143 aa).

The disordered stretch occupies residues 1–52 (MKLNTLAPAAGSKSAPKRLGRGIGSGLGKTSGKGHKGQKARSGGYHKVGFEG). Gly residues predominate over residues 21 to 31 (RGIGSGLGKTS).

This sequence belongs to the universal ribosomal protein uL15 family. As to quaternary structure, part of the 50S ribosomal subunit.

Its function is as follows. Binds to the 23S rRNA. This Francisella tularensis subsp. mediasiatica (strain FSC147) protein is Large ribosomal subunit protein uL15.